The primary structure comprises 288 residues: ATP synthase gamma chain (288 aa).

This sequence belongs to the ATPase gamma chain family. F-type ATPases have 2 components, CF(1) - the catalytic core - and CF(0) - the membrane proton channel. CF(1) has five subunits: alpha(3), beta(3), gamma(1), delta(1), epsilon(1). CF(0) has three main subunits: a, b and c.

It localises to the cell inner membrane. Functionally, produces ATP from ADP in the presence of a proton gradient across the membrane. The gamma chain is believed to be important in regulating ATPase activity and the flow of protons through the CF(0) complex. The chain is ATP synthase gamma chain from Aeromonas hydrophila subsp. hydrophila (strain ATCC 7966 / DSM 30187 / BCRC 13018 / CCUG 14551 / JCM 1027 / KCTC 2358 / NCIMB 9240 / NCTC 8049).